We begin with the raw amino-acid sequence, 148 residues long: Transcriptional regulator MraZ (148 aa).

SpoVT-AbrB domains are found at residues Glu-5–Glu-53 and Ser-82–Ala-125.

Belongs to the MraZ family. In terms of assembly, forms oligomers.

It is found in the cytoplasm. Its subcellular location is the nucleoid. The sequence is that of Transcriptional regulator MraZ from Xylella fastidiosa (strain Temecula1 / ATCC 700964).